A 619-amino-acid chain; its full sequence is DNA mismatch repair protein MutL (619 aa).

Low complexity predominate over residues 364–375 (EPASAREPAAPR). Residues 364–399 (EPASAREPAAPRYSTSSGATGGRQPAASWPHAQPGY) form a disordered region.

The protein belongs to the DNA mismatch repair MutL/HexB family.

Functionally, this protein is involved in the repair of mismatches in DNA. It is required for dam-dependent methyl-directed DNA mismatch repair. May act as a 'molecular matchmaker', a protein that promotes the formation of a stable complex between two or more DNA-binding proteins in an ATP-dependent manner without itself being part of a final effector complex. This Citrobacter koseri (strain ATCC BAA-895 / CDC 4225-83 / SGSC4696) protein is DNA mismatch repair protein MutL.